Reading from the N-terminus, the 238-residue chain is Cysteine-rich venom protein 1 (238 aa).

The N-terminal stretch at 1-19 (MIAFIVLLSLAAVLQQSSG) is a signal peptide. An SCP domain is found at 38–164 (VDKHNALRRS…STKYLYVCQY (127 aa)). Disulfide bonds link Cys-75-Cys-153, Cys-92-Cys-165, Cys-148-Cys-162, Cys-184-Cys-191, Cys-187-Cys-196, Cys-200-Cys-233, Cys-209-Cys-227, and Cys-218-Cys-231. Residues 200–233 (CEYEDTFSNCKALAKKTKCKTEWIKSKCPATCFC) form the ShKT domain.

The protein belongs to the CRISP family. In terms of tissue distribution, expressed by the venom gland.

The protein resides in the secreted. In terms of biological role, blocks contraction of smooth muscle elicited by high potassium-induced depolarization, but does not block caffeine-stimulated contraction. May target voltage-gated calcium channels on smooth muscle. The sequence is that of Cysteine-rich venom protein 1 from Hydrophis hardwickii (Hardwick's spine-bellied seasnake).